The sequence spans 1389 residues: CRISPR-associated endoribonuclease Cas13a (1389 aa).

Residues methionine 1–arginine 347 form an NTD region. Arginine 219 serves as a coordination point for crRNA. Binds crRNA regions lie at residues tyrosine 330 to lysine 342, lysine 405 to tyrosine 408, and tyrosine 432 to lysine 436. The segment at glutamate 348–threonine 498 is helical-1. Catalysis depends on for pre-crRNA processing residues arginine 438 and lysine 441. Position 441 (lysine 441) interacts with crRNA. The segment at lysine 471–arginine 475 is binds crRNA. A crRNA-binding site is contributed by lysine 489. The HEPN-like fold 1-I stretch occupies residues threonine 499–lysine 636. The binds crRNA stretch occupies residues threonine 502–histidine 509. Active-site for target ssRNA cleavage residues include arginine 597 and histidine 602. Positions alanine 637 to lysine 828 are helical-2. Glutamine 759 is a crRNA binding site. The interval threonine 829–asparagine 899 is HEPN-like fold 1-II. The binds crRNA stretch occupies residues asparagine 853 to arginine 858. Tryptophan 865 provides a ligand contact to crRNA. Coiled coils occupy residues threonine 893–glutamine 920, glutamate 968–isoleucine 1046, and lysine 1101–lysine 1131. Residues leucine 900 to glutamate 1170 form a linker region. The HEPN-like fold 2 stretch occupies residues glutamate 1170 to proline 1290. Catalysis depends on for target ssRNA cleavage residues arginine 1278 and histidine 1283. Binds crRNA stretches follow at residues threonine 1311–serine 1316 and lysine 1338–lysine 1339.

It belongs to the CRISPR-associated endoribonuclease Cas13a family. As to quaternary structure, monomer. Mg(2+) is required as a cofactor.

With respect to regulation, RNase activity on target is decreased by EDTA. Target RNA acts as an activator for non-specific ssRNA degradation. In terms of biological role, CRISPR (clustered regularly interspaced short palindromic repeat), is an adaptive immune system that provides protection against mobile genetic elements (viruses, transposable elements and conjugative plasmids). CRISPR clusters contain sequences complementary to antecedent mobile elements (spacers) and target invading nucleic acids. Unlike many single-component effectors, this CRISPR-Cas system targets RNA. CRISPR clusters are transcribed from pre-CRISPR RNA (crRNA) and processed into crRNA (optimally 28 nucleotides in this system) by this protein. This protein processes pre-crRNA at a 'non-typical' site 1 nucleotide upstream of the pre-crRNA stem-loop; it cleaves pre-crRNA from L.buccalis and L.wadei in a similar fashion, whereas the enzymes from the latter 2 bacteria cleave their own pre-crRNA 3 nt further upstream. When the appropriate target sequences are cloned into the CRISPR array, confers immunity to ssRNA(+) enterobacteria phage MS2. Cleaves linear target ssRNA in a crRNA-dependent fashion, preferentially before U residues; has no activity on partially dsRNA, ssDNA or dsDNA. RNA secondary structure surrounding the target influence the cleavage site and efficiency; unlike other CRISPR-Cas effectors Cas13a cleaves outside of the crRNA binding site. In the presence of a viable RNA target other RNAs are also degraded (called collateral RNA degradation), suggesting this type of CRISPR-Cas might also prevent viral spread by inducing programmed cell death or dormancy. This system has a 3' protospacer flanking site (PFS), it does not cleave when the 3' PFS is G (PFS is equivalent to PAM, the protospacer adjacent motif). Mutations of its active site residues results in an RNA-programmed RNA-binding protein. In Leptotrichia shahii (strain DSM 19757 / CCUG 47503 / CIP 107916 / JCM 16776 / LB37), this protein is CRISPR-associated endoribonuclease Cas13a.